The chain runs to 481 residues: O-phosphoseryl-tRNA(Sec) selenium transferase (481 aa).

A tetramerization region spans residues methionine 1–glutamate 36. Arginine 69 serves as a coordination point for pyridoxal 5'-phosphate. The interval glycine 90–proline 100 is phosphate loop (P-loop). Substrate-binding residues include arginine 91, serine 92, and glutamine 99. Lysine 277 carries the N6-(pyridoxal phosphate)lysine modification. A substrate-binding site is contributed by arginine 306.

It belongs to the SepSecS family. Homotetramer formed by a catalytic dimer and a non-catalytic dimer serving as a binding platform that orients tRNASec for catalysis. Each tetramer binds the CCA ends of two tRNAs which point to the active sites of the catalytic dimer. It depends on pyridoxal 5'-phosphate as a cofactor.

It is found in the cytoplasm. It carries out the reaction O-phospho-L-seryl-tRNA(Sec) + selenophosphate + H2O = L-selenocysteinyl-tRNA(Sec) + 2 phosphate. It participates in aminoacyl-tRNA biosynthesis; selenocysteinyl-tRNA(Sec) biosynthesis; selenocysteinyl-tRNA(Sec) from L-seryl-tRNA(Sec) (archaeal/eukaryal route): step 2/2. Functionally, converts O-phosphoseryl-tRNA(Sec) to selenocysteinyl-tRNA(Sec) required for selenoprotein biosynthesis. This is O-phosphoseryl-tRNA(Sec) selenium transferase (secs-1) from Caenorhabditis elegans.